The sequence spans 397 residues: Cytoplasmic tRNA 2-thiolation protein 2 (397 aa).

This sequence belongs to the CTU2/NCS2 family.

The protein localises to the cytoplasm. The protein operates within tRNA modification; 5-methoxycarbonylmethyl-2-thiouridine-tRNA biosynthesis. Its function is as follows. Plays a central role in 2-thiolation of mcm(5)S(2)U at tRNA wobble positions of tRNA(Lys), tRNA(Glu) and tRNA(Gln). May act by forming a heterodimer with NCS6/CTU1 that ligates sulfur from thiocarboxylated URM1 onto the uridine of tRNAs at wobble position. This is Cytoplasmic tRNA 2-thiolation protein 2 from Drosophila grimshawi (Hawaiian fruit fly).